We begin with the raw amino-acid sequence, 122 residues long: MIIGIGNDIIEIERIEKAISKEGFKNKIYTQKELENIQKRGNRTETYAGIFSAKEAISKAIGTGVREFSLTDLEILNDDLGKPYVVVSEKLDKILRNKKENYQIEISISHSRKYATAMAIIL.

Mg(2+) contacts are provided by Asp-8 and Glu-55.

Belongs to the P-Pant transferase superfamily. AcpS family. Mg(2+) serves as cofactor.

Its subcellular location is the cytoplasm. The enzyme catalyses apo-[ACP] + CoA = holo-[ACP] + adenosine 3',5'-bisphosphate + H(+). Its function is as follows. Transfers the 4'-phosphopantetheine moiety from coenzyme A to a Ser of acyl-carrier-protein. The polypeptide is Holo-[acyl-carrier-protein] synthase (Fusobacterium nucleatum subsp. nucleatum (strain ATCC 25586 / DSM 15643 / BCRC 10681 / CIP 101130 / JCM 8532 / KCTC 2640 / LMG 13131 / VPI 4355)).